A 52-amino-acid chain; its full sequence is Large ribosomal subunit protein bL33 (52 aa).

The protein belongs to the bacterial ribosomal protein bL33 family.

The protein is Large ribosomal subunit protein bL33 of Helicobacter acinonychis (strain Sheeba).